A 345-amino-acid chain; its full sequence is Phosphoribosylformylglycinamidine cyclo-ligase (345 aa).

Belongs to the AIR synthase family.

Its subcellular location is the cytoplasm. It carries out the reaction 2-formamido-N(1)-(5-O-phospho-beta-D-ribosyl)acetamidine + ATP = 5-amino-1-(5-phospho-beta-D-ribosyl)imidazole + ADP + phosphate + H(+). Its pathway is purine metabolism; IMP biosynthesis via de novo pathway; 5-amino-1-(5-phospho-D-ribosyl)imidazole from N(2)-formyl-N(1)-(5-phospho-D-ribosyl)glycinamide: step 2/2. The sequence is that of Phosphoribosylformylglycinamidine cyclo-ligase from Anaeromyxobacter sp. (strain K).